Reading from the N-terminus, the 423-residue chain is 26S proteasome regulatory subunit 6A homolog B (423 aa).

Serine 18 carries the post-translational modification Phosphoserine. ATP is bound at residue 211–218 (GPPGTGKT). Glycyl lysine isopeptide (Lys-Gly) (interchain with G-Cter in ubiquitin) cross-links involve residues lysine 234, lysine 278, and lysine 415.

Belongs to the AAA ATPase family. In terms of assembly, component of the 19S regulatory particle (RP/PA700) base subcomplex of the 26S proteasome. The 26S proteasome is composed of a core protease (CP), known as the 20S proteasome, capped at one or both ends by the 19S regulatory particle (RP/PA700). The RP/PA700 complex is composed of at least 17 different subunits in two subcomplexes, the base and the lid, which form the portions proximal and distal to the 20S proteolytic core, respectively.

The protein resides in the cytoplasm. The protein localises to the nucleus. Functionally, the 26S proteasome is involved in the ATP-dependent degradation of ubiquitinated proteins. The regulatory (or ATPase) complex confers ATP dependency and substrate specificity to the 26S complex. The sequence is that of 26S proteasome regulatory subunit 6A homolog B (RPT5B) from Arabidopsis thaliana (Mouse-ear cress).